We begin with the raw amino-acid sequence, 258 residues long: C1q-related factor (258 aa).

The signal sequence occupies residues 1-16; that stretch reads MLLVLVVLIPVLVSSG. A disordered region spans residues 39 to 120; that stretch reads GPGAGARSDG…PGSGGSGAIS (82 aa). Over residues 67 to 77 the composition is skewed to low complexity; sequence GPQGKPGRTGK. The Collagen-like domain maps to 67–115; the sequence is GPQGKPGRTGKPGPPGPPGDRGPPGPVGPPGEKGEPGKPGPPGLPGSGG. Pro residues predominate over residues 78–95; the sequence is PGPPGPPGDRGPPGPVGP. Residues 125 to 258 enclose the C1q domain; sequence TTVPRVAFYA…TFSGFIIYSD (134 aa).

In terms of assembly, interacts with ADGRB3. Forms heterooligomers with C1QL4, when proteins are coexpressed; this interaction does not occur after secretion. As to expression, expressed in brainstem. More abundant in areas of the nervous system involved in motor function, such as the Purkinje cells of the cerebellum, the accessory olivary nucleus, the pons and the red nucleus.

The protein localises to the secreted. May regulate the number of excitatory synapses that are formed on hippocampus neurons. Has no effect on inhibitory synapses. This chain is C1q-related factor (C1ql1), found in Mus musculus (Mouse).